The sequence spans 417 residues: 3-isopropylmalate dehydratase large subunit (417 aa).

[4Fe-4S] cluster-binding residues include Cys-298, Cys-358, and Cys-361.

This sequence belongs to the aconitase/IPM isomerase family. LeuC type 2 subfamily. Heterodimer of LeuC and LeuD. Requires [4Fe-4S] cluster as cofactor.

It carries out the reaction (2R,3S)-3-isopropylmalate = (2S)-2-isopropylmalate. It functions in the pathway amino-acid biosynthesis; L-leucine biosynthesis; L-leucine from 3-methyl-2-oxobutanoate: step 2/4. Catalyzes the isomerization between 2-isopropylmalate and 3-isopropylmalate, via the formation of 2-isopropylmaleate. This is 3-isopropylmalate dehydratase large subunit from Thermoanaerobacter pseudethanolicus (strain ATCC 33223 / 39E) (Clostridium thermohydrosulfuricum).